The following is a 302-amino-acid chain: uncharacterized protein (302 aa).

Positions 1-28 are cleaved as a signal peptide; sequence MNKLTAQNLLKKSRFLKYSLLTSISVGA.

This is an uncharacterized protein from Rickettsia prowazekii (strain Madrid E).